A 178-amino-acid chain; its full sequence is MEHKDDDDDDVSFAKWMSSFWGHSWREEDQRGLRERHRLQATSHRKTSLPCPLPVLPRIPSSDCHPRRHSHEDQEFRCRSHVRDYRKYSEDGSFKEPLESKGRSHSKIEKFSESFERQLCFRTKRSASLGPESRKERNERECLRMEIKSRKKVEEERSSRKEEHGEAHMAPLFEKGPE.

Disordered stretches follow at residues 28-55 (EDQR…PLPV), 89-108 (SEDG…HSKI), and 147-178 (IKSR…KGPE). Residues 34 to 47 (RERHRLQATSHRKT) are compositionally biased toward basic residues. Residues 147 to 167 (IKSRKKVEEERSSRKEEHGEA) show a composition bias toward basic and acidic residues.

The chain is Leukemia NUP98 fusion partner 1 (LNP1) from Homo sapiens (Human).